The following is a 205-amino-acid chain: Glutathione peroxidase 1 (205 aa).

Phosphoserine is present on Ser-37. The active site involves Sec-52. Residue Sec-52 is a non-standard amino acid, selenocysteine. N6-acetyllysine; alternate occurs at positions 91 and 117. An N6-succinyllysine; alternate mark is found at Lys-91 and Lys-117. Lys-117 is a glycosylation site (N-linked (Glc) (glycation) lysine; in vitro). N6-acetyllysine is present on Lys-124. Lys-151 is modified (N6-acetyllysine; alternate). N6-succinyllysine; alternate is present on Lys-151. Phosphoserine is present on residues Ser-200 and Ser-204.

The protein belongs to the glutathione peroxidase family. As to quaternary structure, homotetramer. Interacts with MIEN1. In terms of processing, during periods of oxidative stress, Sec-52 may react with a superoxide radical, irreversibly lose hydroselenide and be converted to dehydroalanine.

The protein resides in the cytoplasm. It is found in the mitochondrion. The catalysed reaction is 2 glutathione + H2O2 = glutathione disulfide + 2 H2O. It catalyses the reaction a hydroperoxy polyunsaturated fatty acid + 2 glutathione = a hydroxy polyunsaturated fatty acid + glutathione disulfide + H2O. It carries out the reaction tert-butyl hydroperoxide + 2 glutathione = tert-butanol + glutathione disulfide + H2O. The enzyme catalyses cumene hydroperoxide + 2 glutathione = 2-phenylpropan-2-ol + glutathione disulfide + H2O. The catalysed reaction is (13S)-hydroperoxy-(9Z,11E)-octadecadienoate + 2 glutathione = (13S)-hydroxy-(9Z,11E)-octadecadienoate + glutathione disulfide + H2O. It catalyses the reaction (9S)-hydroperoxy-(10E,12Z)-octadecadienoate + 2 glutathione = (9S)-hydroxy-(10E,12Z)-octadecadienoate + glutathione disulfide + H2O. It carries out the reaction (5S)-hydroperoxy-(6E,8Z,11Z,14Z)-eicosatetraenoate + 2 glutathione = (5S)-hydroxy-(6E,8Z,11Z,14Z)-eicosatetraenoate + glutathione disulfide + H2O. The enzyme catalyses (12S)-hydroperoxy-(5Z,8Z,10E,14Z)-eicosatetraenoate + 2 glutathione = (12S)-hydroxy-(5Z,8Z,10E,14Z)-eicosatetraenoate + glutathione disulfide + H2O. The catalysed reaction is (12R)-hydroperoxy-(5Z,8Z,10E,14Z)-eicosatetraenoate + 2 glutathione = (12R)-hydroxy-(5Z,8Z,10E,14Z)-eicosatetraenoate + glutathione disulfide + H2O. It catalyses the reaction (15S)-hydroperoxy-(5Z,8Z,11Z,13E)-eicosatetraenoate + 2 glutathione = (15S)-hydroxy-(5Z,8Z,11Z,13E)-eicosatetraenoate + glutathione disulfide + H2O. It carries out the reaction (5S)-hydroperoxy-(6E,8Z,11Z,14Z,17Z)-eicosapentaenoate + 2 glutathione = (5S)-hydroxy-(6E,8Z,11Z,14Z,17Z)-eicosapentaenoate + glutathione disulfide + H2O. The enzyme catalyses (15S)-hydroperoxy-(5Z,8Z,11Z,13E,17Z)-eicosapentaenoate + 2 glutathione = (15S)-hydroxy-(5Z,8Z,11Z,13E,17Z)-eicosapentaenoate + glutathione disulfide + H2O. The catalysed reaction is (15S)-hydroperoxy-(11Z,13E)-eicosadienoate + 2 glutathione = (15S)-hydroxy-(11Z,13E)-eicosadienoate + glutathione disulfide + H2O. It catalyses the reaction (17S)-hydroperoxy-(4Z,7Z,10Z,13Z,15E,19Z)-docosahexaenoate + 2 glutathione = (17S)-hydroxy-(4Z,7Z,10Z,13Z,15E,19Z)-docosahexaenoate + glutathione disulfide + H2O. Functionally, catalyzes the reduction of hydroperoxides in a glutathione-dependent manner thus regulating cellular redox homeostasis. Can reduce small soluble hydroperoxides such as H2O2, cumene hydroperoxide and tert-butyl hydroperoxide, as well as several fatty acid-derived hydroperoxides. In platelets catalyzes the reduction of 12-hydroperoxyeicosatetraenoic acid, the primary product of the arachidonate 12-lipoxygenase pathway. The chain is Glutathione peroxidase 1 (GPX1) from Bos taurus (Bovine).